Here is a 160-residue protein sequence, read N- to C-terminus: Tumor suppressor ARF (160 aa).

The segment at Met1–Pro63 is interaction with CDK5RAP3 and MDM2. Disordered stretches follow at residues Pro49 to Ser74 and His90 to Ala116.

As to quaternary structure, does not interact with cyclins, CDK1, CDK2, CDK4, CDK5 or CDK6. Binds to BCL6, E2F1, HUWE1, MDM2, MYC, NPM1/B23, TOP1/TOPOI and UBE2I/UBC9. Interacts with TBRG1 and COMMD1. Interacts with CDKN2AIP and E4F1. Interacts with CDK5RAP3 and MDM2; form a ternary complex involved in regulation of p53/TP53. Interacts with NOP53; the interaction is direct and promotes ARF nucleoplasmic relocalization and ubiquitin-mediated proteasomal degradation. Interacts with TTF1 (via the N-terminal region (NRD) and a C-terminal region); the interaction is direct and inhibits the nucleolar localization of TTF1. In terms of processing, ubiquitinated in normal cells by TRIP12 via the ubiquitin fusion degradation (UFD) pathway, a process that mediates ubiquitination at the N-terminus, regardless of the absence of lysine residues. Ubiquitination leads to its proteasomal degradation. In cancer cells, however, TRIP12 is located in a different cell compartment, preventing ubiquitination and degradation. Widely expressed with very low levels in kidney and colon.

The protein localises to the nucleus. The protein resides in the nucleolus. Its subcellular location is the nucleoplasm. Functionally, capable of inducing cell cycle arrest in G1 and G2 phases. Acts as a tumor suppressor. Binds to MDM2 and blocks its nucleocytoplasmic shuttling by sequestering it in the nucleolus. This inhibits the oncogenic action of MDM2 by blocking MDM2-induced degradation of p53 and enhancing p53-dependent transactivation and apoptosis. Also induces G2 arrest and apoptosis in a p53-independent manner by preventing the activation of cyclin B1/CDC2 complexes. Binds to BCL6 and down-regulates BCL6-induced transcriptional repression. Binds to E2F1 and MYC and blocks their transcriptional activator activity but has no effect on MYC transcriptional repression. Binds to TOP1/TOPOI and stimulates its activity. This complex binds to rRNA gene promoters and may play a role in rRNA transcription and/or maturation. Interacts with NPM1/B23 and promotes its polyubiquitination and degradation, thus inhibiting rRNA processing. Plays a role in inhibiting ribosome biogenesis, perhaps by binding to the nucleolar localization sequence of transcription termination factor TTF1, and thereby preventing nucleolar localization of TTF1. Interacts with COMMD1 and promotes its 'Lys63'-linked polyubiquitination. Interacts with UBE2I/UBC9 and enhances sumoylation of a number of its binding partners including MDM2 and E2F1. Binds to HUWE1 and represses its ubiquitin ligase activity. May play a role in controlling cell proliferation and apoptosis during mammary gland development. This Rattus norvegicus (Rat) protein is Tumor suppressor ARF.